We begin with the raw amino-acid sequence, 364 residues long: Peroxisomal membrane protein PEX16 (364 aa).

Ser-200 carries the phosphoserine modification.

Belongs to the peroxin-16 family.

It localises to the peroxisome membrane. In terms of biological role, involved in the biogenesis of peroxisomes. This Schizosaccharomyces pombe (strain 972 / ATCC 24843) (Fission yeast) protein is Peroxisomal membrane protein PEX16 (pex16).